A 1084-amino-acid polypeptide reads, in one-letter code: Probable hemoglobin and hemoglobin-haptoglobin-binding protein 3 (1084 aa).

The signal sequence occupies residues 1–24; the sequence is MTNFKFSLLACSIAFALNASTVYA. 12 consecutive repeat copies span residues 26–29, 30–33, 34–37, 38–41, 42–45, 46–49, 50–53, 54–57, 58–61, 62–65, 66–69, and 70–73. Residues 26–73 are 12 X 4 AA tandem repeats of Q-P-T-N; sequence QPTNQPTNQPTNQPTNQPTNQPTNQPTNQPTNQPTNQPTNQPTNQPTN. A compositionally biased stretch (low complexity) spans 26-75; sequence QPTNQPTNQPTNQPTNQPTNQPTNQPTNQPTNQPTNQPTNQPTNQPTNQN. Residues 26-77 are disordered; sequence QPTNQPTNQPTNQPTNQPTNQPTNQPTNQPTNQPTNQPTNQPTNQPTNQNSN. Residues 83-90 carry the TonB box motif; it reads EQINVSGS. The region spanning 95-220 is the TBDR plug domain; that stretch reads NIKEKKVGET…LGGSVIFETK (126 aa). Positions 228–1084 constitute a TBDR beta-barrel domain; sequence DKDYYLSYKR…NYRMSVQFEF (857 aa). Positions 1067–1084 match the TonB C-terminal box motif; sequence NRFYAPGRNYRMSVQFEF.

It belongs to the TonB-dependent receptor family. Hemoglobin/haptoglobin binding protein subfamily.

The protein resides in the cell outer membrane. In terms of biological role, acts as a receptor for hemoglobin or the hemoglobin/haptoglobin complex of the human host and is required for heme uptake. In Haemophilus influenzae (strain ATCC 51907 / DSM 11121 / KW20 / Rd), this protein is Probable hemoglobin and hemoglobin-haptoglobin-binding protein 3.